Here is a 502-residue protein sequence, read N- to C-terminus: ATP synthase subunit alpha (502 aa).

Positions 115 to 135 (VDGLGPINTTNTRPIESPAPG) are disordered. 169–176 (GDRQTGKT) provides a ligand contact to ATP.

This sequence belongs to the ATPase alpha/beta chains family. In terms of assembly, F-type ATPases have 2 components, CF(1) - the catalytic core - and CF(0) - the membrane proton channel. CF(1) has five subunits: alpha(3), beta(3), gamma(1), delta(1), epsilon(1). CF(0) has three main subunits: a(1), b(2) and c(9-12). The alpha and beta chains form an alternating ring which encloses part of the gamma chain. CF(1) is attached to CF(0) by a central stalk formed by the gamma and epsilon chains, while a peripheral stalk is formed by the delta and b chains.

It localises to the cell membrane. The enzyme catalyses ATP + H2O + 4 H(+)(in) = ADP + phosphate + 5 H(+)(out). Produces ATP from ADP in the presence of a proton gradient across the membrane. The alpha chain is a regulatory subunit. The sequence is that of ATP synthase subunit alpha from Bacillus mycoides (strain KBAB4) (Bacillus weihenstephanensis).